The sequence spans 573 residues: (R)-mandelonitrile lyase 3 (573 aa).

The first 27 residues, 1 to 27, serve as a signal peptide directing secretion; it reads MVKSTMSAVLLVLHIFVLHLQYSEVQS. An N-linked (GlcNAc...) asparagine glycan is attached at Asn30. 63-64 provides a ligand contact to FAD; that stretch reads TA. The N-linked (GlcNAc...) asparagine glycan is linked to Asn75. FAD-binding positions include 82-83, Val129, Thr133, and 137-140; these read ER and NAGV. N-linked (GlcNAc...) asparagine glycans are attached at residues Asn145, Asn150, Asn162, and Asn218. Val244 contributes to the FAD binding site. N-linked (GlcNAc...) asparagine glycosylation is found at Asn252, Asn267, and Asn309. Substrate is bound at residue Cys356. N-linked (GlcNAc...) asparagine glycosylation is found at Asn380, Asn402, Asn420, and Asn467. A disulfide bridge connects residues Cys427 and Cys478. Tyr485 serves as a coordination point for substrate. FAD contacts are provided by residues 486-487 and Gly515; that span reads WH. His487 (proton donor) is an active-site residue. His525 functions as the Proton acceptor in the catalytic mechanism. 526–527 contacts FAD; sequence PQ.

It belongs to the GMC oxidoreductase family. As to quaternary structure, monomer. It depends on FAD as a cofactor.

Its subcellular location is the vacuole. The protein resides in the aleurone grain. The enzyme catalyses (R)-mandelonitrile = benzaldehyde + hydrogen cyanide. Involved in cyanogenesis, the release of HCN from injured tissues. Catalyzes the stereospecific addition of HCN to a variety of aldehydes in vitro. It is a major seed constituent, and could have the additional role of a storage form for reduced nitrogen. The sequence is that of (R)-mandelonitrile lyase 3 (MDL3) from Prunus serotina (Black cherry).